Here is a 1024-residue protein sequence, read N- to C-terminus: Beta-galactosidase (1024 aa).

Residues N103 and D202 each contribute to the substrate site. Residue D202 participates in Na(+) binding. Mg(2+) contacts are provided by E417, H419, and E462. Residues E462 and 538-541 (EYAH) contribute to the substrate site. The active-site Proton donor is E462. E538 serves as the catalytic Nucleophile. Position 598 (N598) interacts with Mg(2+). F602 and N605 together coordinate Na(+). 2 residues coordinate substrate: N605 and W1000.

This sequence belongs to the glycosyl hydrolase 2 family. As to quaternary structure, homotetramer. Requires Mg(2+) as cofactor. The cofactor is Na(+).

It catalyses the reaction Hydrolysis of terminal non-reducing beta-D-galactose residues in beta-D-galactosides.. The protein is Beta-galactosidase of Shigella sonnei (strain Ss046).